A 201-amino-acid polypeptide reads, in one-letter code: FMN-dependent NADH:quinone oxidoreductase (201 aa).

Residues Ser10, 16-18 (SQS), 96-99 (MYNF), and 140-143 (SRGG) each bind FMN.

It belongs to the azoreductase type 1 family. Homodimer. The cofactor is FMN.

It carries out the reaction 2 a quinone + NADH + H(+) = 2 a 1,4-benzosemiquinone + NAD(+). It catalyses the reaction N,N-dimethyl-1,4-phenylenediamine + anthranilate + 2 NAD(+) = 2-(4-dimethylaminophenyl)diazenylbenzoate + 2 NADH + 2 H(+). Quinone reductase that provides resistance to thiol-specific stress caused by electrophilic quinones. Functionally, also exhibits azoreductase activity. Catalyzes the reductive cleavage of the azo bond in aromatic azo compounds to the corresponding amines. This chain is FMN-dependent NADH:quinone oxidoreductase, found in Escherichia coli O6:H1 (strain CFT073 / ATCC 700928 / UPEC).